A 364-amino-acid chain; its full sequence is tRNA 2-selenouridine synthase (364 aa).

The Rhodanese domain occupies 14 to 137; that stretch reads LIADTPIIDV…LRQAAIQATI (124 aa). Cysteine 97 functions as the S-selanylcysteine intermediate in the catalytic mechanism.

Belongs to the SelU family. As to quaternary structure, monomer.

It catalyses the reaction 5-methylaminomethyl-2-thiouridine(34) in tRNA + selenophosphate + (2E)-geranyl diphosphate + H2O + H(+) = 5-methylaminomethyl-2-selenouridine(34) in tRNA + (2E)-thiogeraniol + phosphate + diphosphate. The enzyme catalyses 5-methylaminomethyl-2-thiouridine(34) in tRNA + (2E)-geranyl diphosphate = 5-methylaminomethyl-S-(2E)-geranyl-thiouridine(34) in tRNA + diphosphate. The catalysed reaction is 5-methylaminomethyl-S-(2E)-geranyl-thiouridine(34) in tRNA + selenophosphate + H(+) = 5-methylaminomethyl-2-(Se-phospho)selenouridine(34) in tRNA + (2E)-thiogeraniol. It carries out the reaction 5-methylaminomethyl-2-(Se-phospho)selenouridine(34) in tRNA + H2O = 5-methylaminomethyl-2-selenouridine(34) in tRNA + phosphate. In terms of biological role, involved in the post-transcriptional modification of the uridine at the wobble position (U34) of tRNA(Lys), tRNA(Glu) and tRNA(Gln). Catalyzes the conversion of 2-thiouridine (S2U-RNA) to 2-selenouridine (Se2U-RNA). Acts in a two-step process involving geranylation of 2-thiouridine (S2U) to S-geranyl-2-thiouridine (geS2U) and subsequent selenation of the latter derivative to 2-selenouridine (Se2U) in the tRNA chain. This Shigella sonnei (strain Ss046) protein is tRNA 2-selenouridine synthase.